Consider the following 104-residue polypeptide: Large ribosomal subunit protein bL21 (104 aa).

It belongs to the bacterial ribosomal protein bL21 family. In terms of assembly, part of the 50S ribosomal subunit. Contacts protein L20.

This protein binds to 23S rRNA in the presence of protein L20. The chain is Large ribosomal subunit protein bL21 from Thermotoga sp. (strain RQ2).